An 80-amino-acid chain; its full sequence is FLLCFFLVADVSYGINKDCLLPMDVGRCRARHPRYYYNSSSKRCEMFNYGGCRGNANNFITKKECEKVCGVRSRDSPKEN.

The N-terminal stretch at 1–14 is a signal peptide; the sequence is FLLCFFLVADVSYG. Residues 19–69 enclose the BPTI/Kunitz inhibitor domain; sequence CLLPMDVGRCRARHPRYYYNSSSKRCEMFNYGGCRGNANNFITKKECEKVC. 3 disulfides stabilise this stretch: C19/C69, C28/C52, and C44/C65. Positions 74–80 are excised as a propeptide; the sequence is RDSPKEN.

It belongs to the venom Kunitz-type family. Sea anemone type 2 potassium channel toxin subfamily.

It localises to the secreted. It is found in the nematocyst. In terms of biological role, serine protease inhibitor that inhibits both tissue and plasma kallikreins. Has hemolytic activity. Inhibits voltage-gated potassium channels (Kv). In Anemonia viridis (Snakelocks anemone), this protein is U-actitoxin-Avd3s.